The chain runs to 891 residues: Protein translocase subunit SecA 1 (891 aa).

ATP contacts are provided by residues glutamine 85, 103–107 (GEGKT), and aspartate 491. Cysteine 877, cysteine 879, cysteine 888, and cysteine 889 together coordinate Zn(2+).

Belongs to the SecA family. In terms of assembly, monomer and homodimer. Part of the essential Sec protein translocation apparatus which comprises SecA, SecYEG and auxiliary proteins SecDF. Other proteins may also be involved. Zn(2+) serves as cofactor.

The protein localises to the cell membrane. It localises to the cytoplasm. It carries out the reaction ATP + H2O + cellular proteinSide 1 = ADP + phosphate + cellular proteinSide 2.. Functionally, part of the Sec protein translocase complex. Interacts with the SecYEG preprotein conducting channel. Has a central role in coupling the hydrolysis of ATP to the transfer of proteins into and across the cell membrane, serving as an ATP-driven molecular motor driving the stepwise translocation of polypeptide chains across the membrane. This chain is Protein translocase subunit SecA 1, found in Clostridioides difficile (strain 630) (Peptoclostridium difficile).